Reading from the N-terminus, the 321-residue chain is Coproporphyrin III ferrochelatase (321 aa).

Residues H185 and E267 each coordinate Fe(2+).

This sequence belongs to the ferrochelatase family.

The protein resides in the cytoplasm. The catalysed reaction is Fe-coproporphyrin III + 2 H(+) = coproporphyrin III + Fe(2+). Its pathway is porphyrin-containing compound metabolism; protoheme biosynthesis. Involved in coproporphyrin-dependent heme b biosynthesis. Catalyzes the insertion of ferrous iron into coproporphyrin III to form Fe-coproporphyrin III. This is Coproporphyrin III ferrochelatase from Lacticaseibacillus paracasei (strain ATCC 334 / BCRC 17002 / CCUG 31169 / CIP 107868 / KCTC 3260 / NRRL B-441) (Lactobacillus paracasei).